Consider the following 370-residue polypeptide: Chaperone protein DnaJ (370 aa).

Residues 5–69 (DYYEVLGVDR…QKKAHYDQFG (65 aa)) form the J domain. A CR-type zinc finger spans residues 128-210 (GKETTIEIPR…CGGKGKVRKR (83 aa)). Zn(2+) contacts are provided by Cys141, Cys144, Cys158, Cys161, Cys184, Cys187, Cys198, and Cys201. CXXCXGXG motif repeat units follow at residues 141–148 (CHTCSGSG), 158–165 (CPHCGGSG), 184–191 (CHHCEGTG), and 198–205 (CATCGGKG).

It belongs to the DnaJ family. As to quaternary structure, homodimer. Zn(2+) is required as a cofactor.

It is found in the cytoplasm. Participates actively in the response to hyperosmotic and heat shock by preventing the aggregation of stress-denatured proteins and by disaggregating proteins, also in an autonomous, DnaK-independent fashion. Unfolded proteins bind initially to DnaJ; upon interaction with the DnaJ-bound protein, DnaK hydrolyzes its bound ATP, resulting in the formation of a stable complex. GrpE releases ADP from DnaK; ATP binding to DnaK triggers the release of the substrate protein, thus completing the reaction cycle. Several rounds of ATP-dependent interactions between DnaJ, DnaK and GrpE are required for fully efficient folding. Also involved, together with DnaK and GrpE, in the DNA replication of plasmids through activation of initiation proteins. This Halalkalibacterium halodurans (strain ATCC BAA-125 / DSM 18197 / FERM 7344 / JCM 9153 / C-125) (Bacillus halodurans) protein is Chaperone protein DnaJ.